We begin with the raw amino-acid sequence, 294 residues long: Cyclin-dependent kinase 5 homolog (294 aa).

The 283-residue stretch at 4 to 286 (YDKMEKIGEG…AEAAMQHPYF (283 aa)) folds into the Protein kinase domain. Residues 10-18 (IGEGTYGTV) and Lys33 each bind ATP. The residue at position 14 (Thr14) is a Phosphothreonine. Tyr15 is subject to Phosphotyrosine. Asp126 acts as the Proton acceptor in catalysis. At Ser159 the chain carries Phosphoserine.

This sequence belongs to the protein kinase superfamily. CMGC Ser/Thr protein kinase family. CDC2/CDKX subfamily. Abundantly expressed in all adult tissues. Lower levels found in larvae and early embryos. Barely detectable in late embryos.

It carries out the reaction L-seryl-[protein] + ATP = O-phospho-L-seryl-[protein] + ADP + H(+). It catalyses the reaction L-threonyl-[protein] + ATP = O-phospho-L-threonyl-[protein] + ADP + H(+). In terms of biological role, probably involved in the control of the cell cycle. Interacts with D1 and D3-type G1 cyclins. Possible regulator of neuronal differentiation and/or development. This chain is Cyclin-dependent kinase 5 homolog (Cdk5), found in Drosophila melanogaster (Fruit fly).